The primary structure comprises 272 residues: ATP-dependent Clp protease proteolytic subunit, mitochondrial (272 aa).

The transit peptide at 1-52 directs the protein to the mitochondrion; the sequence is MWPRVLLGEARVAVDGCRALLSRLAVHFSPPWTAVSCSPLRRSLHGTATRAF. The Nucleophile role is filled by serine 149. Histidine 174 is a catalytic residue. The residue at position 196 (lysine 196) is an N6-succinyllysine. The residue at position 207 (lysine 207) is an N6-acetyllysine. Residues 240 to 272 form a disordered region; sequence VLVHPPQDGEDEPELVQKETATAPTDPPAPTST.

This sequence belongs to the peptidase S14 family. Fourteen CLPP subunits assemble into 2 heptameric rings which stack back to back to give a disk-like structure with a central cavity. Component of the ClpXP complex formed by the assembly of two CLPP heptameric rings with two CLPX hexameric rings, giving rise to a symmetrical structure with two central CLPP rings flanked by a CLPX ring at either end of the complex. Detected in liver (at protein level). High levels found in heart, liver and skeletal muscle.

Its subcellular location is the mitochondrion matrix. The enzyme catalyses Hydrolysis of proteins to small peptides in the presence of ATP and magnesium. alpha-casein is the usual test substrate. In the absence of ATP, only oligopeptides shorter than five residues are hydrolyzed (such as succinyl-Leu-Tyr-|-NHMec, and Leu-Tyr-Leu-|-Tyr-Trp, in which cleavage of the -Tyr-|-Leu- and -Tyr-|-Trp bonds also occurs).. Protease component of the ClpXP complex that cleaves peptides and various proteins in an ATP-dependent process. Has low peptidase activity in the absence of CLPX. The ClpXP complex can degrade CSN1S1, CSN2 and CSN3, as well as synthetic peptides (in vitro) and may be responsible for a fairly general and central housekeeping function rather than for the degradation of specific substrates. Cleaves PINK1 in the mitochondrion. This is ATP-dependent Clp protease proteolytic subunit, mitochondrial from Mus musculus (Mouse).